The chain runs to 287 residues: UPF0761 membrane protein MS0032 (287 aa).

A run of 6 helical transmembrane segments spans residues 37–57 (MLAI…FPMF), 93–113 (SMSA…INQI), 128–148 (FIFS…FIGM), 174–194 (LLSF…YTLV), 204–224 (AAVG…AFAW), and 238–258 (AMAT…FILL).

This sequence belongs to the UPF0761 family.

It is found in the cell inner membrane. This is UPF0761 membrane protein MS0032 from Mannheimia succiniciproducens (strain KCTC 0769BP / MBEL55E).